The sequence spans 408 residues: Probable fructose-2,6-bisphosphatase C732.02c (408 aa).

16–24 serves as a coordination point for ATP; the sequence is GLPASGKTS. Asp88 is an active-site residue. 127 to 132 provides a ligand contact to ATP; that stretch reads NITDMC. A beta-D-fructose 6-phosphate-binding site is contributed by Tyr157. Arg213 is a binding site for beta-D-fructose 2,6-bisphosphate. The Tele-phosphohistidine intermediate role is filled by His214. Beta-D-fructose 2,6-bisphosphate contacts are provided by Asn220 and Gly226. The Proton donor/acceptor role is filled by Glu285. Residues Tyr296, Arg310, Lys314, Tyr325, Gln351, and Arg355 each contribute to the beta-D-fructose 2,6-bisphosphate site. Residue 307–310 coordinates ATP; the sequence is AELR. Residues 351 to 355 and Tyr387 contribute to the ATP site; that span reads QAILR.

This sequence in the C-terminal section; belongs to the phosphoglycerate mutase family.

The catalysed reaction is beta-D-fructose 2,6-bisphosphate + H2O = beta-D-fructose 6-phosphate + phosphate. Functionally, this is predominantly if not solely a fructose-2,6-bisphosphatase. This Schizosaccharomyces pombe (strain 972 / ATCC 24843) (Fission yeast) protein is Probable fructose-2,6-bisphosphatase C732.02c.